Reading from the N-terminus, the 353-residue chain is MYYLSDLSHYAFFTYISVRAGFAFFIALCLSLFLMPKFITWAKAKNASQPIYEYAPETHKTKCHTPTMGGLIFISSAVIASLFCIKFDNIFAISALLCLILFCLIGLIDDLGKVLKKDNHSGLSPRMKLLAQIIAGLICILPLYFSSELSTELFIPFYKHPLFDMEIFAIAFWILVLISSSNAVNLTDGLDGLATVPSIFSLSTLGIFLYLSGNLNYSEYLLLPKIQGLGEVVIICAALIGALMGFLWYNCYPAQVFMGDSGSLALGGFIGFLAIISKNEILLLLIGFVFVLETVSVILQVGSFKIFNKRVFKMAPIHHHFEKVGWVENKIIVRFWMIALLSNLLALASIKLR.

The next 10 helical transmembrane spans lie at 22 to 42 (FAFF…ITWA), 65 to 85 (TPTM…LFCI), 88 to 108 (DNIF…IGLI), 129 to 149 (LLAQ…SSEL), 161 to 181 (PLFD…ISSS), 192 to 212 (GLAT…LYLS), 228 to 248 (GLGE…GFLW), 256 to 276 (VFMG…LAII), 281 to 301 (ILLL…ILQV), and 330 to 350 (KIIV…LASI).

It belongs to the glycosyltransferase 4 family. MraY subfamily. Mg(2+) is required as a cofactor.

The protein localises to the cell inner membrane. It catalyses the reaction UDP-N-acetyl-alpha-D-muramoyl-L-alanyl-gamma-D-glutamyl-meso-2,6-diaminopimeloyl-D-alanyl-D-alanine + di-trans,octa-cis-undecaprenyl phosphate = di-trans,octa-cis-undecaprenyl diphospho-N-acetyl-alpha-D-muramoyl-L-alanyl-D-glutamyl-meso-2,6-diaminopimeloyl-D-alanyl-D-alanine + UMP. Its pathway is cell wall biogenesis; peptidoglycan biosynthesis. Its function is as follows. Catalyzes the initial step of the lipid cycle reactions in the biosynthesis of the cell wall peptidoglycan: transfers peptidoglycan precursor phospho-MurNAc-pentapeptide from UDP-MurNAc-pentapeptide onto the lipid carrier undecaprenyl phosphate, yielding undecaprenyl-pyrophosphoryl-MurNAc-pentapeptide, known as lipid I. In Campylobacter jejuni (strain RM1221), this protein is Phospho-N-acetylmuramoyl-pentapeptide-transferase.